A 484-amino-acid chain; its full sequence is Cobyric acid synthase (484 aa).

The 188-residue stretch at 248 to 435 (VLKVIVPVLP…LHGLFEGSQS (188 aa)) folds into the GATase cobBQ-type domain. Residue cysteine 329 is the Nucleophile of the active site. The active site involves histidine 427.

It belongs to the CobB/CobQ family. CobQ subfamily.

Its pathway is cofactor biosynthesis; adenosylcobalamin biosynthesis. Catalyzes amidations at positions B, D, E, and G on adenosylcobyrinic A,C-diamide. NH(2) groups are provided by glutamine, and one molecule of ATP is hydrogenolyzed for each amidation. The polypeptide is Cobyric acid synthase (Pseudomonas putida (strain GB-1)).